The chain runs to 288 residues: Dichloromethane dehalogenase (288 aa).

The 83-residue stretch at 12–94 (KTLRLLYHPA…YVNEKFDGAG (83 aa)) folds into the GST N-terminal domain. The GST C-terminal domain occupies 100–252 (GTQERAQINQ…ASMFKRKTAV (153 aa)).

The protein belongs to the GST superfamily. In terms of assembly, homohexamer.

Its subcellular location is the cytoplasm. The enzyme catalyses dichloromethane + H2O = formaldehyde + 2 chloride + 2 H(+). It participates in xenobiotic degradation; dichloromethane degradation. The protein is Dichloromethane dehalogenase (dcmA) of Methylorubrum extorquens (strain DSM 6343 / CIP 106787 / DM4) (Methylobacterium extorquens).